A 355-amino-acid chain; its full sequence is Blue-sensitive opsin (355 aa).

The Extracellular segment spans residues 1–36; that stretch reads MNGTEGINFYVPLSNKTGLVRSPFEYPQYYLAEPWK. 2 N-linked (GlcNAc...) asparagine glycosylation sites follow: asparagine 2 and asparagine 15. Residues 37 to 61 traverse the membrane as a helical segment; sequence YKVVCCYIFFLIFTGLPINILTLLV. At 62-73 the chain is on the cytoplasmic side; the sequence is TFKHKKLRQPLN. Residues 74–98 form a helical membrane-spanning segment; it reads YILVNLAVADLFMACFGFTVTFYTA. Over 99–113 the chain is Extracellular; the sequence is WNGYFIFGPIGCAIE. The cysteines at positions 110 and 187 are disulfide-linked. The chain crosses the membrane as a helical span at residues 114-133; that stretch reads GFFATLGGQVALWSLVVLAI. The Cytoplasmic portion of the chain corresponds to 134–152; it reads ERYIVVCKPMGNFRFSATH. Residues 153–176 traverse the membrane as a helical segment; it reads ALMGISFTWFMSFSCAAPPLLGWS. The Extracellular segment spans residues 177–202; sequence RYIPEGMQCSCGPDYYTLNPDYHNES. The N-linked (GlcNAc...) asparagine glycan is linked to asparagine 200. A helical transmembrane segment spans residues 203–230; it reads YVLYMFGVHFVIPVVVIFFSYGRLICKV. Residues 231-252 lie on the Cytoplasmic side of the membrane; the sequence is REAAAQQQESASTQKAEREVTR. Residues 253-276 form a helical membrane-spanning segment; sequence MVILMVLGFLLAWTPYAMVAFWIF. Residues 277–284 lie on the Extracellular side of the membrane; that stretch reads TNKGVDFS. A helical transmembrane segment spans residues 285 to 309; sequence ATLMSVPAFFSKSSSLYNPIIYVLM. Lysine 296 carries the post-translational modification N6-(retinylidene)lysine. Residues 310–355 are Cytoplasmic-facing; the sequence is NKQFRNCMITTICCGKNPFGDEDVSSSVSQSKTEVSSVSSSQVSPA. 2 S-palmitoyl cysteine lipidation sites follow: cysteine 322 and cysteine 323. The disordered stretch occupies residues 332 to 355; the sequence is DVSSSVSQSKTEVSSVSSSQVSPA. Positions 334–355 are enriched in low complexity; that stretch reads SSSVSQSKTEVSSVSSSQVSPA.

Belongs to the G-protein coupled receptor 1 family. Opsin subfamily. Post-translationally, phosphorylated on some or all of the serine and threonine residues present in the C-terminal region.

The protein resides in the membrane. Visual pigments are the light-absorbing molecules that mediate vision. They consist of an apoprotein, opsin, covalently linked to cis-retinal. This opsin uses a vitamin A2 chromophore. The sequence is that of Blue-sensitive opsin from Anolis carolinensis (Green anole).